Consider the following 345-residue polypeptide: Tubulin-folding cofactor C (345 aa).

Methionine 1 carries the post-translational modification N-acetylmethionine. Positions 1-10 are enriched in polar residues; that stretch reads MEDDGQSSVA. The disordered stretch occupies residues 1–83; it reads MEDDGQSSVA…SRLASSSTDS (83 aa). Residues 23–39 show a composition bias toward basic and acidic residues; sequence DMLERLSARHQARKSDS. Residues 40 to 55 are compositionally biased toward low complexity; it reads PDSSSSSSSTLESTSS. Residues 61–73 show a composition bias toward basic and acidic residues; sequence SDSKRSIESRIAE. Over residues 74 to 83 the composition is skewed to low complexity; the sequence is SRLASSSTDS. The C-CAP/cofactor C-like domain occupies 169-318; the sequence is PPKLVPVRDS…NWANVDDFRW (150 aa).

The protein belongs to the TBCC family. In terms of assembly, supercomplex made of cofactors A to E. Cofactors A and D function by capturing and stabilizing tubulin in a quasi-native conformation. Cofactor E binds to the cofactor D-tubulin complex; interaction with cofactor C then causes the release of tubulin polypeptides that are committed to the native state. Ubiquitously expressed (at protein level). Present in leaves, roots, flowers, and stems.

The protein localises to the cytoplasm. Functionally, essential tubulin-folding protein involved in the final step of the tubulin folding pathway. Required for continuous microtubule cytoskeleton organization, mitotic division, cytokinesis, and to couple cell cycle progression to cell division in embryos and endosperms. Not essential for cell viability. Binds probably to the multimeric supercomplex, stimulating GTP hydrolysis by the bound beta-tubulin and the release of the alpha-/beta-tubulin heterodimer. The sequence is that of Tubulin-folding cofactor C (TFCC) from Arabidopsis thaliana (Mouse-ear cress).